Here is a 939-residue protein sequence, read N- to C-terminus: Collagen-like protein 3 (939 aa).

4 N-linked (GlcNAc...) asparagine; by host glycosylation sites follow: asparagine 15, asparagine 35, asparagine 39, and asparagine 82. The span at 84–95 (SGSSGPSGPQGP) shows a compositional bias: low complexity. 2 disordered regions span residues 84–332 (SGSS…DLGN) and 358–697 (SIKG…KGEA). Collagen-like domains are found at residues 88 to 147 (GPSG…NGDK), 148 to 207 (GNKG…KGDK), 211 to 330 (GNKG…SPDL), 364 to 423 (GDKG…SGAD), 427 to 486 (GDKG…KGEK), 493 to 552 (GESG…KGSK), 564 to 622 (GDKG…KGDV), and 638 to 697 (GDKG…KGEA). 13 stretches are compositionally biased toward basic and acidic residues: residues 96–110 (KGEK…DKGE), 123–182 (DADK…DPGI), 189–230 (DADK…DIGL), 237–260 (DADK…DIGP), 267–288 (DADK…KGTK), 297–314 (KGDK…DKGE), 360–371 (KGDKGDKGDTGL), 378–416 (DADK…DTGL), 423–491 (DADK…DVGI), 498–527 (DADK…DTGI), 537–552 (KGDK…KGSK), 560–580 (KGDK…DIGI), and 589–684 (KGDK…DKGD). Residues asparagine 788, asparagine 820, asparagine 858, asparagine 919, and asparagine 925 are each glycosylated (N-linked (GlcNAc...) asparagine; by host). The disordered stretch occupies residues 896–923 (NGETGAPTTDSGTNYGAGGGGGGNGTQG). Residues 910 to 923 (YGAGGGGGGNGTQG) are compositionally biased toward gly residues.

May be hydroxylated on lysine by the viral-encoded procollagen-lysine,2-oxoglutarate 5-dioxygenase.

It localises to the virion. Its function is as follows. May participate in the formation of a layer of cross-linked glycosylated fibrils at the viral surface thus giving it a hairy-like appearance. In Acanthamoeba polyphaga (Amoeba), this protein is Collagen-like protein 3.